The sequence spans 246 residues: Transcription factor A, mitochondrial (246 aa).

The N-terminal 42 residues, 1–42, are a transit peptide targeting the mitochondrion; the sequence is MAFLRSMWGVLSALGRSGAAVCIGCGSRLRSPFSFVYLPKCF. Positions 50–118 form a DNA-binding region, HMG box 1; sequence PKKPVSSYLR…VYKEKISRFK (69 aa). Ser-55, Ser-56, and Ser-61 each carry phosphoserine; by PKA. Residue Thr-122 is modified to Phosphothreonine. A DNA-binding region (HMG box 2) is located at residues 155-219; that stretch reads PKRPRSAYNV…RYHNEMKSWE (65 aa). Ser-160 carries the post-translational modification Phosphoserine; by PKA. Ser-193 and Ser-195 each carry phosphoserine.

As to quaternary structure, monomer; binds DNA as a monomer. Homodimer. Component of the mitochondrial transcription initiation complex, composed at least of TFB2M, TFAM and POLRMT. In this complex TFAM recruits POLRMT to the promoter whereas TFB2M induces structural changes in POLRMT to enable promoter opening and trapping of the DNA non-template strand. Upon metabolic stress, forms a complex composed of FOXO3, SIRT3, TFAM and POLRMT. Interacts with TFB1M and TFB2M. Interacts with CLPX; this enhances DNA-binding. Phosphorylation by PKA within the HMG box 1 impairs DNA binding and promotes degradation by the AAA+ Lon protease.

The protein localises to the mitochondrion. It localises to the mitochondrion matrix. It is found in the mitochondrion nucleoid. Binds to the mitochondrial light strand promoter and functions in mitochondrial transcription regulation. Component of the mitochondrial transcription initiation complex, composed at least of TFB2M, TFAM and POLRMT that is required for basal transcription of mitochondrial DNA. In this complex, TFAM recruits POLRMT to a specific promoter whereas TFB2M induces structural changes in POLRMT to enable promoter opening and trapping of the DNA non-template strand. Required for accurate and efficient promoter recognition by the mitochondrial RNA polymerase. Promotes transcription initiation from the HSP1 and the light strand promoter by binding immediately upstream of transcriptional start sites. Is able to unwind DNA. Bends the mitochondrial light strand promoter DNA into a U-turn shape via its HMG boxes. Required for maintenance of normal levels of mitochondrial DNA. May play a role in organizing and compacting mitochondrial DNA. The sequence is that of Transcription factor A, mitochondrial from Trachypithecus cristatus (Silvered leaf-monkey).